A 555-amino-acid chain; its full sequence is Embryonic protein DC-8 (555 aa).

Residues 83–115 show a composition bias toward basic and acidic residues; the sequence is RENTDYAYDKGREGGDVAAQKAEEAKEKAKMAK. Disordered regions lie at residues 83-118 and 132-151; these read RENTDYAYDKGREGGDVAAQKAEEAKEKAKMAKDTT and KAEEAKEKAAQKAEETKEKA. Tandem repeats lie at residues 97-114, 115-125, 126-140, 141-154, 155-176, 177-191, 192-205, 206-216, 217-237, 238-259, 260-281, 282-303, 304-325, 326-343, 344-358, 359-376, and 377-391. The segment at 97–391 is 17 X approximate tandem repeats; that stretch reads GDVAAQKAEE…DTTVGKMTEL (295 aa). A disordered region spans residues 184–204; that stretch reads AAEAKDTTAQKAAEAKEKTGE. Residues 444–465 are compositionally biased toward basic and acidic residues; it reads LQEEGVKDEAKQRAEADRETAG. The tract at residues 444–472 is disordered; that stretch reads LQEEGVKDEAKQRAEADRETAGDRGSAAK.

This sequence belongs to the LEA type 4 family.

It is found in the cytoplasm. It localises to the secreted. Its subcellular location is the cell wall. Its function is as follows. May play a role in late embryogeny. This is Embryonic protein DC-8 from Daucus carota (Wild carrot).